Reading from the N-terminus, the 959-residue chain is Kinesin-like protein NACK1 (959 aa).

The interval 1–28 (MTVRTPGTPASKIDKTPATTPNGHRGRE) is disordered. One can recognise a Kinesin motor domain in the interval 30–353 (KIVVTVRLRP…LYFATRAKEV (324 aa)). 117-124 (GQTSSGKT) contacts ATP. Threonine 145 carries the phosphothreonine modification. The stretch at 362 to 429 (VVSDKQLVKH…LRRKLQEEQG (68 aa)) forms a coiled coil. 4 disordered regions span residues 417 to 438 (VDEL…SVSP), 451 to 473 (SPNL…GRQS), 598 to 640 (LPSN…FLKS), and 658 to 700 (NRAP…SVNM). Basic and acidic residues-rich tracts occupy residues 418–429 (DELRRKLQEEQG) and 454–466 (LEEK…ERTR). Residues 557-598 (KSVSANLKEEIARLHSQGSTIADLEEQLENVQKSLDKLVMSL) adopt a coiled-coil conformation. Low complexity predominate over residues 600–611 (SNNDQQSNNDTT). Positions 613–623 (KAKHPSKKKKL) are enriched in basic residues. Over residues 630 to 640 (NSINRQNFLKS) the composition is skewed to polar residues. Residues threonine 675 and threonine 690 each carry the phosphothreonine modification. The required for the binding to NPK1 stretch occupies residues 685-756 (SSKEGTPYRR…EANEAAGYNL (72 aa)).

This sequence belongs to the TRAFAC class myosin-kinesin ATPase superfamily. Kinesin family. KIN-7 subfamily. Interacts (via C-terminus) with NPK1 (via C-terminus). In terms of processing, phosphorylated at Thr-145, Thr-675 and Thr-690 by CDKAs and CDKBs. The phosphorylation occurs before metaphase and inhibits the interaction with NPK1 preventing the transition to cytokinesis.

Its subcellular location is the cytoplasm. The protein localises to the nucleus. It localises to the cytoskeleton. It is found in the phragmoplast. In terms of biological role, probable plus end-directed motor protein that functions in the NACK-PQR (NPK1-NQK1/MEK1-NRK1) MAP kinase signaling pathway, which is essential for somatic cell cytokinesis, especially for the cell-plate formation and its expansion. Regulates the activity and the localization of NPK1 by association through the non-catalytic region of the kinase. The protein is Kinesin-like protein NACK1 (NACK1) of Nicotiana tabacum (Common tobacco).